We begin with the raw amino-acid sequence, 1415 residues long: Non-structural polyprotein 1AB (1415 aa).

Positions 104–142 form a coiled coil; sequence KLIHKANALQERLRLSQEEKATLALDVQFLQHENVRLKE. The next 5 membrane-spanning stretches (helical) occupy residues 154–174, 239–259, 286–306, 313–333, and 344–364; these read MKWIIVGAVLTFLSLIPGGYA, VFYYIHYYEMWNIFMFVLAIG, VLPTIPFHTTMTLWVMNTLMV, LLAITLAILAPILGIIFLCFM, and GLIATAVLIAGGHACLTLTGT. Residues histidine 461, aspartate 489, and serine 551 each act as charge relay system; for serine protease activity in the active site. Residues 587–616 adopt a coiled-coil conformation; that stretch reads VKAPSRVELLKEEIERLKAQLNSAAENPAT. Residue tyrosine 693 is modified to O-(5'-phospho-RNA)-tyrosine. Positions 753–813 are disordered; it reads FDQAKPTPAP…KNEPQPYSQT (61 aa). Residues 783–795 are compositionally biased toward basic and acidic residues; sequence SQKKEKQLEHEQQ. Over residues 800–813 the composition is skewed to polar residues; it reads TKPQKNEPQPYSQT. The RdRp catalytic domain maps to 1160-1286; the sequence is KHFIEFDWTR…TTPSVPDDYE (127 aa).

It belongs to the astroviridae polyprotein 1AB family. As to quaternary structure, monomer. In terms of processing, cleaved by the viral and host proteases. The protease is probably autocatalytically cleaved.

It localises to the host membrane. It carries out the reaction RNA(n) + a ribonucleoside 5'-triphosphate = RNA(n+1) + diphosphate. Responsible for the cleavage of the polyprotein into functional products. In terms of biological role, covalently attached to the 5' extremity of the genomic and subgenomic RNAs. It may serve as a primer for the replicase. This is Non-structural polyprotein 1AB (ORF1) from Human astrovirus-4 (HAstV-4).